The primary structure comprises 504 residues: Cytochrome P450 4A25 (504 aa).

2 helical membrane-spanning segments follow: residues 6–26 (LASA…LLLL) and 110–130 (APVL…LLNG). Residue Cys-451 participates in heme binding.

It belongs to the cytochrome P450 family. Heme is required as a cofactor.

Its subcellular location is the endoplasmic reticulum membrane. It carries out the reaction an omega-methyl-long-chain fatty acid + reduced [NADPH--hemoprotein reductase] + O2 = an omega-hydroxy-long-chain fatty acid + oxidized [NADPH--hemoprotein reductase] + H2O + H(+). Catalyzes the omega- and (omega-1)-hydroxylation of various fatty acids such as laurate and palmitate. Has no activity toward taurochenodeoxycholic acid. This is Cytochrome P450 4A25 (CYP4A25) from Sus scrofa (Pig).